The primary structure comprises 362 residues: 4-hydroxytryptamine kinase (362 aa).

ATP-binding positions include Asn37, Lys57, and Gln118–Val120. Asp224 is a catalytic residue. Position 249–251 (Asp249–Glu251) interacts with ATP.

It belongs to the methylthioribose kinase family. In terms of assembly, monomer. Mg(2+) serves as cofactor.

It carries out the reaction 4-hydroxytryptamine + ATP = norbaeocystin + ADP + H(+). The enzyme catalyses psilocin + ATP = psilocybin + ADP + H(+). The catalysed reaction is 4-hydroxy-N,N,N-trimethyltryptamine + ATP = aeruginascin + ADP + H(+). The protein operates within secondary metabolite biosynthesis. In terms of biological role, 4-hydroxytryptamine kinase; part of the gene cluster that mediates the biosynthesis of psilocybin, a psychotropic tryptamine-derived natural product. The first step in the pathway is the decarboxylation of L-tryptophan to tryptamine by the decarboxylase psiD. 4-hydroxy-L-tryptophan is accepted as substrate by psiD as well. The cytochrome P450 monooxygenase psiH then converts tryptamine to 4-hydroxytryptamine. The kinase psiK catalyzes the 4-O-phosphorylation step by converting 4-hydroxytryptamine into norbaeocystin. The methyltransferase psiM then catalyzes iterative methyl transfer to the amino group of norbaeocystin to yield psilocybin via a monomethylated intermediate, baeocystin. 4-hydroxy-6-methyl-l-tryptophancan also be converted the decarboxylase PsiD, kinase PsiK, and methyltransferase PsiM into respectively 6-methyl-norbaeocystin, 6-methylbaeocystin, and 6-methylpsilocybin. PsiK kinase can also turn psilocin into psilocybin. This activity may represent a protective mechanism to rephosphorylate the unstable psilocin to the stable psilocybin in case of intracellular ester cleavage. Moreover, psiK is able to O-phosphorylate the quaternary amine 4-hydroxy-N,N,N-trimethyltryptamine (4-OH-TMT) to yield aeruginascin, another bioactive compound found in Psilocybe species. The protein is 4-hydroxytryptamine kinase of Psilocybe cubensis (Psychedelic mushroom).